Here is a 218-residue protein sequence, read N- to C-terminus: Glutathione S-transferase Mu 7 (218 aa).

Positions 1–88 constitute a GST N-terminal domain; that stretch reads MPMTLGYWDI…YLGRKHNLCG (88 aa). Glutathione-binding positions include 7 to 8, 46 to 50, 59 to 60, and 72 to 73; these read YW, WLNEK, NL, and QS. The region spanning 90–208 is the GST C-terminal domain; it reads TEEERIRVDI…KTSRFLPRPM (119 aa). Residue Tyr116 coordinates substrate.

This sequence belongs to the GST superfamily. Mu family. Homodimer.

Its subcellular location is the cytoplasm. The enzyme catalyses RX + glutathione = an S-substituted glutathione + a halide anion + H(+). In terms of biological role, conjugation of reduced glutathione to a wide number of exogenous and endogenous hydrophobic electrophiles. The sequence is that of Glutathione S-transferase Mu 7 (Gstm7) from Mus musculus (Mouse).